The following is a 198-amino-acid chain: Threonylcarbamoyl-AMP synthase (198 aa).

The 184-residue stretch at 15-198 folds into the YrdC-like domain; it reads LLKIYHIIKL…AISGQLIRRG (184 aa).

This sequence belongs to the SUA5 family. TsaC subfamily.

The protein localises to the cytoplasm. It catalyses the reaction L-threonine + hydrogencarbonate + ATP = L-threonylcarbamoyladenylate + diphosphate + H2O. In terms of biological role, required for the formation of a threonylcarbamoyl group on adenosine at position 37 (t(6)A37) in tRNAs that read codons beginning with adenine. Catalyzes the conversion of L-threonine, HCO(3)(-)/CO(2) and ATP to give threonylcarbamoyl-AMP (TC-AMP) as the acyladenylate intermediate, with the release of diphosphate. The chain is Threonylcarbamoyl-AMP synthase from Baumannia cicadellinicola subsp. Homalodisca coagulata.